The chain runs to 166 residues: Large ribosomal subunit protein uL10 (166 aa).

The protein belongs to the universal ribosomal protein uL10 family. As to quaternary structure, part of the ribosomal stalk of the 50S ribosomal subunit. The N-terminus interacts with L11 and the large rRNA to form the base of the stalk. The C-terminus forms an elongated spine to which L12 dimers bind in a sequential fashion forming a multimeric L10(L12)X complex.

Forms part of the ribosomal stalk, playing a central role in the interaction of the ribosome with GTP-bound translation factors. The chain is Large ribosomal subunit protein uL10 from Shewanella amazonensis (strain ATCC BAA-1098 / SB2B).